The sequence spans 303 residues: Ribonuclease Z (303 aa).

The Zn(2+) site is built by H61, H63, D65, H66, H139, D207, and H266. The active-site Proton acceptor is the D65.

It belongs to the RNase Z family. In terms of assembly, homodimer. The cofactor is Zn(2+).

It catalyses the reaction Endonucleolytic cleavage of RNA, removing extra 3' nucleotides from tRNA precursor, generating 3' termini of tRNAs. A 3'-hydroxy group is left at the tRNA terminus and a 5'-phosphoryl group is left at the trailer molecule.. Its function is as follows. Zinc phosphodiesterase, which displays some tRNA 3'-processing endonuclease activity. Probably involved in tRNA maturation, by removing a 3'-trailer from precursor tRNA. The polypeptide is Ribonuclease Z (Clostridium kluyveri (strain ATCC 8527 / DSM 555 / NBRC 12016 / NCIMB 10680 / K1)).